The chain runs to 258 residues: UPF0246 protein YaaA (258 aa).

The protein belongs to the UPF0246 family.

This is UPF0246 protein YaaA from Escherichia coli O157:H7.